A 346-amino-acid chain; its full sequence is Outer membrane protein A (346 aa).

The N-terminal stretch at 1–21 (MKKTAIAIAVALAGFATVAQA) is a signal peptide. Transmembrane regions (beta stranded) follow at residues 27–37 (TWYTGAKLGWS), 55–66 (QLGAGAFGGYQV), 70–78 (VGFEMGYDW), 96–107 (QGVQLTAKLGYP), 112–120 (LDIYTRLGG), 142–151 (PVFAGGVEYA), 156–163 (IATRLEYQ), and 182–190 (MLSLGVSYR). Residues 197–208 (APVVAPAPAPAP) form a hinge-like region. A run of 4 repeats spans residues 201–202 (AP), 203–204 (AP), 205–206 (AP), and 207–208 (AP). Positions 201–208 (APAPAPAP) are 4 X 2 AA tandem repeats of A-P. One can recognise an OmpA-like domain in the interval 210-338 (VQTKHFTLKS…RVEIEVKGIK (129 aa)). A disulfide bridge links Cys311 with Cys323.

This sequence belongs to the outer membrane OOP (TC 1.B.6) superfamily. OmpA family. Monomer and homodimer.

The protein resides in the cell outer membrane. With TolR probably plays a role in maintaining the position of the peptidoglycan cell wall in the periplasm. Acts as a porin with low permeability that allows slow penetration of small solutes; an internal gate slows down solute passage. In terms of biological role, required for conjugation with F-type plasmids; probably serves as the mating receptor on recipient cells. In Escherichia coli O157:H7, this protein is Outer membrane protein A.